The chain runs to 256 residues: Ribonuclease HII (256 aa).

One can recognise an RNase H type-2 domain in the interval 72–256 (ALICGIDEVG…SFEPIKSMMK (185 aa)). Positions 78, 79, and 170 each coordinate a divalent metal cation.

It belongs to the RNase HII family. Requires Mn(2+) as cofactor. The cofactor is Mg(2+).

Its subcellular location is the cytoplasm. The catalysed reaction is Endonucleolytic cleavage to 5'-phosphomonoester.. In terms of biological role, endonuclease that specifically degrades the RNA of RNA-DNA hybrids. The polypeptide is Ribonuclease HII (Staphylococcus epidermidis (strain ATCC 12228 / FDA PCI 1200)).